Consider the following 380-residue polypeptide: Magnesium-protoporphyrin IX monomethyl ester [oxidative] cyclase 1 (380 aa).

This sequence belongs to the AcsF family. Fe cation is required as a cofactor.

The catalysed reaction is Mg-protoporphyrin IX 13-monomethyl ester + 3 NADPH + 3 O2 + 2 H(+) = 3,8-divinyl protochlorophyllide a + 3 NADP(+) + 5 H2O. It functions in the pathway porphyrin-containing compound metabolism; chlorophyll biosynthesis (light-independent). Functionally, catalyzes the formation of the isocyclic ring in chlorophyll biosynthesis. Mediates the cyclase reaction, which results in the formation of divinylprotochlorophyllide (Pchlide) characteristic of all chlorophylls from magnesium-protoporphyrin IX 13-monomethyl ester (MgPMME). This Thermosynechococcus vestitus (strain NIES-2133 / IAM M-273 / BP-1) protein is Magnesium-protoporphyrin IX monomethyl ester [oxidative] cyclase 1.